The sequence spans 150 residues: MTTEKKTMNISEIQELLPHRYPFLLIDRVIDFQEEKYLHAIKNVSVNEPQFTGHFPQLPVFPGVLILEAMAQATGLLAFKSFGAPTENELYYFASVDGAKFRKPVVPGDQMIIEVEFLKERRGIAAFKGVAKVDGEVVCSAELKCARREF.

Residue His-54 is part of the active site.

This sequence belongs to the thioester dehydratase family. FabZ subfamily.

It is found in the cytoplasm. It carries out the reaction a (3R)-hydroxyacyl-[ACP] = a (2E)-enoyl-[ACP] + H2O. Functionally, involved in unsaturated fatty acids biosynthesis. Catalyzes the dehydration of short chain beta-hydroxyacyl-ACPs and long chain saturated and unsaturated beta-hydroxyacyl-ACPs. The sequence is that of 3-hydroxyacyl-[acyl-carrier-protein] dehydratase FabZ from Vibrio campbellii (strain ATCC BAA-1116).